A 210-amino-acid chain; its full sequence is Putative fructokinase-8 (210 aa).

The protein belongs to the carbohydrate kinase PfkB family.

The catalysed reaction is D-fructose + ATP = D-fructose 6-phosphate + ADP + H(+). It participates in glycan biosynthesis; starch biosynthesis. In terms of biological role, may play an important role in maintaining the flux of carbon towards starch formation. The polypeptide is Putative fructokinase-8 (Arabidopsis thaliana (Mouse-ear cress)).